Reading from the N-terminus, the 387-residue chain is Synaptotagmin-8 (387 aa).

Residues 1–34 are Extracellular-facing; it reads MGHPPVSPSAPAPAGTTAIPGLIPDLVAGTPWPR. Residues 35 to 55 traverse the membrane as a helical; Signal-anchor for type III membrane protein segment; it reads WALIAGALAAGVLLVSCLLCA. Topologically, residues 56–387 are cytoplasmic; the sequence is ACCCCRRHRK…LRLRLPLPHS (332 aa). Residues 70 to 99 form a disordered region; the sequence is KESVGLGSARGTTTTHLVQPDVDGLESSPG. 2 consecutive C2 domains span residues 103–219 and 231–346; these read QWGC…EHWY and QVGE…QHWA.

This sequence belongs to the synaptotagmin family. As to quaternary structure, homodimer or homooligomer. Homodimerization and homooligomerization do not depend on Ca(2+). Interacts with SYNCRIP isoform 2 C-terminus. Binds inositol 1,3,4,5-tetrakisphosphate (IP4). Binds to AP2 in a Ca(2+)-independent manner. Interacts with STX1A, STX1B and STX2; the interaction is Ca(2+)-dependent.

Its subcellular location is the cell membrane. It is found in the cytoplasmic vesicle. It localises to the secretory vesicle. The protein resides in the acrosome. Its function is as follows. Involved in the trafficking and exocytosis of secretory vesicles in non-neuronal tissues. Mediates Ca(2+)-regulation of exocytosis acrosomal reaction in sperm. May mediate Ca(2+)-regulation of exocytosis in insulin secreted cells. The polypeptide is Synaptotagmin-8 (SYT8) (Homo sapiens (Human)).